The sequence spans 442 residues: Chromosomal replication initiator protein DnaA (442 aa).

The domain I, interacts with DnaA modulators stretch occupies residues 1–75 (MDAWPRCLER…GNGEVALAVG (75 aa)). The segment at 75-104 (GSRPRAPEPLPAPQAVASAPAAAPIVPFAG) is domain II. A domain III, AAA+ region region spans residues 105–322 (NLDSHYTFAN…GALNTLVARA (218 aa)). ATP is bound by residues Gly-150, Gly-152, Lys-153, and Thr-154. A domain IV, binds dsDNA region spans residues 323–442 (NFTGRSITVE…WEKLIRKLSE (120 aa)).

The protein belongs to the DnaA family. As to quaternary structure, oligomerizes as a right-handed, spiral filament on DNA at oriC.

The protein localises to the cytoplasm. Functionally, plays an essential role in the initiation and regulation of chromosomal replication. ATP-DnaA binds to the origin of replication (oriC) to initiate formation of the DNA replication initiation complex once per cell cycle. Binds the DnaA box (a 9 base pair repeat at the origin) and separates the double-stranded (ds)DNA. Forms a right-handed helical filament on oriC DNA; dsDNA binds to the exterior of the filament while single-stranded (ss)DNA is stabiized in the filament's interior. The ATP-DnaA-oriC complex binds and stabilizes one strand of the AT-rich DNA unwinding element (DUE), permitting loading of DNA polymerase. After initiation quickly degrades to an ADP-DnaA complex that is not apt for DNA replication. Binds acidic phospholipids. The polypeptide is Chromosomal replication initiator protein DnaA (Xanthomonas campestris pv. campestris (strain B100)).